The chain runs to 111 residues: Small ribosomal subunit protein bS16 (111 aa).

Belongs to the bacterial ribosomal protein bS16 family.

This chain is Small ribosomal subunit protein bS16, found in Rickettsia africae (strain ESF-5).